A 964-amino-acid chain; its full sequence is Integrator complex subunit 4 (964 aa).

Lys27 bears the N6-acetyllysine mark. HEAT repeat units lie at residues Ala67–Phe106, Gln146–Ser184, Gly191–Lys229, Leu230–Tyr264, Ile278–Ser314, Asn370–Ser406, Pro407–Leu445, and Glu447–Leu485. Lys792 participates in a covalent cross-link: Glycyl lysine isopeptide (Lys-Gly) (interchain with G-Cter in SUMO1); alternate. Lys792 participates in a covalent cross-link: Glycyl lysine isopeptide (Lys-Gly) (interchain with G-Cter in SUMO2); alternate.

Belongs to the Integrator subunit 4 family. In terms of assembly, component of the Integrator complex, composed of core subunits INTS1, INTS2, INTS3, INTS4, INTS5, INTS6, INTS7, INTS8, INTS9/RC74, INTS10, INTS11/CPSF3L, INTS12, INTS13, INTS14 and INTS15. The core complex associates with protein phosphatase 2A subunits PPP2CA and PPP2R1A, to form the Integrator-PP2A (INTAC) complex. INTS4 is part of the RNA endonuclease subcomplex, composed of INTS4, INTS9, INTS11 and inositol hexakisphosphate (InsP6). Interacts with BRAT1; interaction is required for the assembly of the RNA endonuclease subcomplex.

It localises to the nucleus. It is found in the cytoplasm. Functionally, component of the integrator complex, a multiprotein complex that terminates RNA polymerase II (Pol II) transcription in the promoter-proximal region of genes. The integrator complex provides a quality checkpoint during transcription elongation by driving premature transcription termination of transcripts that are unfavorably configured for transcriptional elongation: the complex terminates transcription by (1) catalyzing dephosphorylation of the C-terminal domain (CTD) of Pol II subunit POLR2A/RPB1 and SUPT5H/SPT5, (2) degrading the exiting nascent RNA transcript via endonuclease activity and (3) promoting the release of Pol II from bound DNA. The integrator complex is also involved in terminating the synthesis of non-coding Pol II transcripts, such as enhancer RNAs (eRNAs), small nuclear RNAs (snRNAs), telomerase RNAs and long non-coding RNAs (lncRNAs). Within the integrator complex, INTS4 acts as an scaffold that links INTS9 and INTS11. Mediates recruitment of cytoplasmic dynein to the nuclear envelope, probably as component of the integrator complex. In Mus musculus (Mouse), this protein is Integrator complex subunit 4 (Ints4).